A 102-amino-acid polypeptide reads, in one-letter code: Small ribosomal subunit protein uS10 (102 aa).

It belongs to the universal ribosomal protein uS10 family. In terms of assembly, part of the 30S ribosomal subunit.

Its function is as follows. Involved in the binding of tRNA to the ribosomes. The polypeptide is Small ribosomal subunit protein uS10 (Gluconobacter oxydans (strain 621H) (Gluconobacter suboxydans)).